A 327-amino-acid chain; its full sequence is uncharacterized protein (327 aa).

Residues 13–33 (IICIISIIVLLLIIISLYPHK) form a helical membrane-spanning segment.

Its subcellular location is the membrane. This is an uncharacterized protein from Caenorhabditis elegans.